The chain runs to 62 residues: Large ribosomal subunit protein bL28 (62 aa).

This sequence belongs to the bacterial ribosomal protein bL28 family.

This is Large ribosomal subunit protein bL28 from Streptococcus uberis (strain ATCC BAA-854 / 0140J).